A 284-amino-acid polypeptide reads, in one-letter code: Tropomyosin (284 aa).

Residues 1-284 are a coiled coil; that stretch reads MDAIKKKMLA…DSTFAELAGY (284 aa). Residues 105 to 131 form a disordered region; sequence RLQSATEKLEEASKAADESERGRKVLE.

Belongs to the tropomyosin family. In terms of assembly, homodimer.

In terms of biological role, tropomyosin, in association with the troponin complex, plays a central role in the calcium dependent regulation of muscle contraction. In Cornu aspersum (Brown garden snail), this protein is Tropomyosin.